The primary structure comprises 351 residues: Biotin synthase (351 aa).

Residues 42 to 269 (NEVQVSTLLS…KSHVRLSAGR (228 aa)) enclose the Radical SAM core domain. Positions 57, 61, and 64 each coordinate [4Fe-4S] cluster. [2Fe-2S] cluster-binding residues include cysteine 101, cysteine 132, cysteine 192, and arginine 264.

It belongs to the radical SAM superfamily. Biotin synthase family. As to quaternary structure, homodimer. Requires [4Fe-4S] cluster as cofactor. [2Fe-2S] cluster serves as cofactor.

The catalysed reaction is (4R,5S)-dethiobiotin + (sulfur carrier)-SH + 2 reduced [2Fe-2S]-[ferredoxin] + 2 S-adenosyl-L-methionine = (sulfur carrier)-H + biotin + 2 5'-deoxyadenosine + 2 L-methionine + 2 oxidized [2Fe-2S]-[ferredoxin]. Its pathway is cofactor biosynthesis; biotin biosynthesis; biotin from 7,8-diaminononanoate: step 2/2. Functionally, catalyzes the conversion of dethiobiotin (DTB) to biotin by the insertion of a sulfur atom into dethiobiotin via a radical-based mechanism. The polypeptide is Biotin synthase (Psychromonas ingrahamii (strain DSM 17664 / CCUG 51855 / 37)).